A 363-amino-acid polypeptide reads, in one-letter code: MKVKVLSLLVPALLVAGAANAAEIYNKDGNKLDLYGKVDGLHYFSDDDSQDGDQTYMRLGFKGETQVNDQLTGYGQWEYQIQGNSGENENNSWTRVAFAGLKFGDAGSFDYGRNYGVVYDVTSWTDVLPEFGGDTYGSDNFMQQRGNGFATYRNSDFFGLVDGLNFAVQYQGKNGSASGEDQTNNGRTELRQNGDGVGGSITYNLGEGFGIGTAVSSSKRTSSQNDLTYGNGDRAETYTGGLKYDANNIYLAAQYTQTYNATRVGNLGWANKAQNFEVVAQYQFDFGLRPSVAYLQSKGKDLENGYGDQDLLKYVDVGATYYFNKNMSTYVDYKINLLDDKEFTRNAGISTDDIVALGLVYQF.

Positions 1–21 (MKVKVLSLLVPALLVAGAANA) are cleaved as a signal peptide. A compositionally biased stretch (polar residues) spans 174-187 (NGSASGEDQTNNGR). A disordered region spans residues 174-195 (NGSASGEDQTNNGRTELRQNGD).

It belongs to the Gram-negative porin family. As to quaternary structure, homotrimer. Probably forms mixed heterotrimers with OmpF; other mixed heterotrimers are also probable.

It localises to the cell outer membrane. Functionally, forms pores that allow passive diffusion of small molecules across the outer membrane. Its function is as follows. (Microbial infection) Binds CdiA-EC536, probably acts as the outer membrane receptor for toxin CdiA-EC536 with OmpF. The chain is Outer membrane porin C (ompC) from Enterobacter cloacae subsp. cloacae (strain ATCC 13047 / DSM 30054 / NBRC 13535 / NCTC 10005 / WDCM 00083 / NCDC 279-56).